We begin with the raw amino-acid sequence, 314 residues long: Ribosomal protein L11 methyltransferase (314 aa).

Thr152, Gly184, Asp206, and Asn248 together coordinate S-adenosyl-L-methionine.

Belongs to the methyltransferase superfamily. PrmA family.

It localises to the cytoplasm. The enzyme catalyses L-lysyl-[protein] + 3 S-adenosyl-L-methionine = N(6),N(6),N(6)-trimethyl-L-lysyl-[protein] + 3 S-adenosyl-L-homocysteine + 3 H(+). In terms of biological role, methylates ribosomal protein L11. The sequence is that of Ribosomal protein L11 methyltransferase from Geotalea daltonii (strain DSM 22248 / JCM 15807 / FRC-32) (Geobacter daltonii).